The primary structure comprises 223 residues: Putative 3-methyladenine DNA glycosylase (223 aa).

This sequence belongs to the DNA glycosylase MPG family.

This is Putative 3-methyladenine DNA glycosylase from Rickettsia typhi (strain ATCC VR-144 / Wilmington).